The primary structure comprises 297 residues: Putative 6-phosphogluconate dehydrogenase YqeC (297 aa).

Residues 7-12 and Asn-94 each bind NAD(+); that span reads GLGKMG. Substrate contacts are provided by residues Asn-94 and 120–122; that span reads SGG. Lys-170 (proton acceptor) is an active-site residue. 173–174 provides a ligand contact to substrate; the sequence is HN. Glu-177 acts as the Proton donor in catalysis. Residues Tyr-178 and Arg-268 each contribute to the substrate site.

The protein belongs to the 6-phosphogluconate dehydrogenase family.

May act as NAD-dependent 6-P-gluconate dehydrogenase. The polypeptide is Putative 6-phosphogluconate dehydrogenase YqeC (yqeC) (Bacillus subtilis (strain 168)).